The chain runs to 452 residues: Dimethyladenosine transferase 2, mitochondrial (452 aa).

S-adenosyl-L-methionine contacts are provided by I46, E99, and D125. Residues 408–452 form a disordered region; the sequence is ANDEPNLEDGVTLPEEDDAEADEIIEEESPVPATTPVKRRRKASS. Residues 421-436 are compositionally biased toward acidic residues; sequence PEEDDAEADEIIEEES.

This sequence belongs to the class I-like SAM-binding methyltransferase superfamily. rRNA adenine N(6)-methyltransferase family. KsgA subfamily.

It localises to the mitochondrion. Its function is as follows. Probable S-adenosyl-L-methionine-dependent methyltransferase which specifically dimethylates mitochondrial 12S rRNA at the conserved stem loop. Also required for basal transcription of mitochondrial DNA. Also regulates mitochondrial DNA copy number. Stimulates transcription independently of the methyltransferase activity. This Drosophila melanogaster (Fruit fly) protein is Dimethyladenosine transferase 2, mitochondrial (mtTFB2).